The primary structure comprises 94 residues: MTKDRRAALVRITGRVQGVCFRDWTREEAEKLGLDGWVRNESDGSVTALIAGPDGAVSRMLENFWKGPPGASIADVASEVASSVEAPAGFRITR.

The 88-residue stretch at A7–R94 folds into the Acylphosphatase-like domain. Residues R22 and N40 contribute to the active site.

It belongs to the acylphosphatase family.

The catalysed reaction is an acyl phosphate + H2O = a carboxylate + phosphate + H(+). This Sinorhizobium medicae (strain WSM419) (Ensifer medicae) protein is Acylphosphatase (acyP).